A 440-amino-acid chain; its full sequence is Xaa-Pro dipeptidase (440 aa).

5 residues coordinate Mn(2+): aspartate 244, aspartate 255, histidine 335, glutamate 380, and glutamate 419.

Belongs to the peptidase M24B family. Bacterial-type prolidase subfamily. Mn(2+) serves as cofactor.

The enzyme catalyses Xaa-L-Pro dipeptide + H2O = an L-alpha-amino acid + L-proline. Its function is as follows. Splits dipeptides with a prolyl residue in the C-terminal position. The sequence is that of Xaa-Pro dipeptidase from Shewanella baltica (strain OS195).